A 400-amino-acid chain; its full sequence is Lysophospholipid transporter LplT (400 aa).

12 helical membrane-spanning segments follow: residues 19–39 (VIVA…ATLA), 53–73 (VLQM…GQIA), 91–111 (AGAA…LVGI), 139–159 (LMEA…GVLA), 164–184 (IAAL…NLFI), 195–213 (SWRL…VVLW), 227–247 (LFWG…PVAL), 257–277 (YLNA…AKLV), 281–301 (TVSR…IFSL), 304–324 (ALLP…FFVV), 352–372 (NSAM…GVPA), and 373–393 (VAIG…LWIW).

Belongs to the major facilitator superfamily. LplT (TC 2.A.1.42) family.

The protein resides in the cell inner membrane. Functionally, catalyzes the facilitated diffusion of 2-acyl-glycero-3-phosphoethanolamine (2-acyl-GPE) into the cell. In Salmonella typhi, this protein is Lysophospholipid transporter LplT.